The chain runs to 194 residues: H-N-H endonuclease F-TflI (194 aa).

Its function is as follows. Endonuclease that cleaves only one strand of asymmetric DNA substrates thereby introducing interruptions into the template or coding strand. In Escherichia coli (Enterobacteria phage T5), this protein is H-N-H endonuclease F-TflI.